A 456-amino-acid polypeptide reads, in one-letter code: MKYTLEGSNARVIAKAVQSLSKVGKEMFIEIDQQSLQMRAINATQSAVGSISFKRSMFEVYDMPPHSDFYCKISMKGCLAVFRNMNEVEYCELNLLDNQTNLQVNLRCKLETTKEATISIIDDQNINTNINTDQMPNIIRGDHKLLTDISNNFNSSEEELTLEANSGSVVAKNYIEGARVNDKFMRTQLKLKPSEFEQYQVTKETVITFCIKEFRAFLLFAECLNASLTLEFDEAGMPFLLKIKKHGEIECLLIMSTLSPDDISFSEDYCQKDLTVQDEDVRAAAAKRKSSVSKPNVTNKRKGSSSEPAAVQPKRRVEETQLESSLDNPLFQFRDSEAPSVQHPRILAEVDTVVLIEDEAEQEALMLAAADAALEASMAPAPEPPNSTEVCFINTDDSQQPKPAKSSSDEDETIPQSPERPNKVLGVLLGLLQGCVSRLKTMLRLDEHLISGYELL.

Residues 300-302 carry the Nuclear localization signal motif; the sequence is KRK.

Belongs to the rad9 family. Component of the 9-1-1 checkpoint clamp complex consisting of Rad9 isoform A, Rad1 and Hus1-like; the interaction with Hus1-like is direct. Does not interact directly with Rad1; this interaction is probably mediated by Hus1-like. This complex probably also forms with Rad9 isoform B, however 9-1-1 complex containing Rad9 isoform A localizes to the nuclear periphery. Interacts with Brca2. As to expression, expressed in ovary.

It is found in the nucleus envelope. The protein resides in the nucleus. Functionally, component of the Rad9-Rad1-Hus1 (9-1-1) checkpoint clamp complex. Targets the 9-1-1 complex to the nuclear periphery. Targeting to the nuclear periphery is disrupted in the presence of persistent double stranded break DNA damage, possibly as a function of the meiotic checkpoint. The protein is Cell cycle checkpoint control protein Rad9 of Drosophila melanogaster (Fruit fly).